Here is a 605-residue protein sequence, read N- to C-terminus: Elongation factor 4 (605 aa).

The tr-type G domain occupies 4–181; sequence NKIKTFSIIA…AIVEYVPSPL (178 aa). Residues 16–21 and 128–131 each bind GTP; these read DHGKST and NKVD.

It belongs to the TRAFAC class translation factor GTPase superfamily. Classic translation factor GTPase family. LepA subfamily.

The protein localises to the cell membrane. The enzyme catalyses GTP + H2O = GDP + phosphate + H(+). Its function is as follows. Required for accurate and efficient protein synthesis under certain stress conditions. May act as a fidelity factor of the translation reaction, by catalyzing a one-codon backward translocation of tRNAs on improperly translocated ribosomes. Back-translocation proceeds from a post-translocation (POST) complex to a pre-translocation (PRE) complex, thus giving elongation factor G a second chance to translocate the tRNAs correctly. Binds to ribosomes in a GTP-dependent manner. The protein is Elongation factor 4 of Mycoplasmopsis synoviae (strain 53) (Mycoplasma synoviae).